The chain runs to 363 residues: Putative glutamate--cysteine ligase 2 (363 aa).

Belongs to the glutamate--cysteine ligase type 2 family. YbdK subfamily.

It carries out the reaction L-cysteine + L-glutamate + ATP = gamma-L-glutamyl-L-cysteine + ADP + phosphate + H(+). In terms of biological role, ATP-dependent carboxylate-amine ligase which exhibits weak glutamate--cysteine ligase activity. The polypeptide is Putative glutamate--cysteine ligase 2 (Streptomyces coelicolor (strain ATCC BAA-471 / A3(2) / M145)).